The following is a 217-amino-acid chain: Kunitz-type trypsin inhibitor-like 2 protein (217 aa).

The signal sequence occupies residues 1–26; that stretch reads MKPLSPLTLSFLLFVFITTLSLAFSN. 2 cysteine pairs are disulfide-bonded: Cys70-Cys115 and Cys168-Cys175. Residue Asn191 is glycosylated (N-linked (GlcNAc...) asparagine).

This sequence belongs to the protease inhibitor I3 (leguminous Kunitz-type inhibitor) family.

The protein resides in the secreted. Might act as a protease inhibitor involved in plant defense responses. The polypeptide is Kunitz-type trypsin inhibitor-like 2 protein (PIP20-2) (Pisum sativum (Garden pea)).